Here is a 151-residue protein sequence, read N- to C-terminus: Protein-export protein SecB (151 aa).

Belongs to the SecB family. In terms of assembly, homotetramer, a dimer of dimers. One homotetramer interacts with 1 SecA dimer.

It localises to the cytoplasm. Functionally, one of the proteins required for the normal export of preproteins out of the cell cytoplasm. It is a molecular chaperone that binds to a subset of precursor proteins, maintaining them in a translocation-competent state. It also specifically binds to its receptor SecA. This is Protein-export protein SecB from Azoarcus sp. (strain BH72).